Here is a 298-residue protein sequence, read N- to C-terminus: Short-chain dehydrogenase reductase 4 (298 aa).

Residue 50–74 (IITGGASGIGAEAVRLFTDHGAKVV) participates in NAD(+) binding. Residue serine 182 participates in substrate binding. Tyrosine 195 acts as the Proton acceptor in catalysis.

This sequence belongs to the short-chain dehydrogenases/reductases (SDR) family.

This Arabidopsis thaliana (Mouse-ear cress) protein is Short-chain dehydrogenase reductase 4 (SDR4).